The chain runs to 950 residues: uncharacterized protein (950 aa).

This is an uncharacterized protein from Rickettsia prowazekii (strain Madrid E).